The following is a 240-amino-acid chain: MVDKKEPASGWPILKGEYEVGDVKGCVAVITCASHLPGKPVLDAGAAITGSCKTENLGIEKVVAHVISNPNIRYLVVTGAEVKGHVTGQAMLSIHANGVKEHRIVGAVGAIPYVENLNDDAVARFQQQIETVNLLDTEDMGAITAKVRELVAKDPGAFDAEPMVVEISEEGEEEEEGGVVRPVSGEIAVIRSRLKAIEARMLDIGNLNKFHSGVHAGKIEGAMIGLTVTISLLGLLLLGR.

At 1 to 218 (MVDKKEPASG…KFHSGVHAGK (218 aa)) the chain is on the cytoplasmic side. H85 serves as a coordination point for 5-hydroxybenzimidazolylcob(I)amide. Residues 219–239 (IEGAMIGLTVTISLLGLLLLG) form a helical membrane-spanning segment. Residue R240 is a topological domain, extracellular.

Belongs to the MtrA family. The complex is composed of 8 subunits; MtrA, MtrB, MtrC, MtrD, MtrE, MtrF, MtrG and MtrH. The cofactor is 5-hydroxybenzimidazolylcob(I)amide.

The protein localises to the cell membrane. It carries out the reaction 5-methyl-5,6,7,8-tetrahydromethanopterin + coenzyme M + 2 Na(+)(in) = 5,6,7,8-tetrahydromethanopterin + methyl-coenzyme M + 2 Na(+)(out). It participates in one-carbon metabolism; methanogenesis from CO(2); methyl-coenzyme M from 5,10-methylene-5,6,7,8-tetrahydromethanopterin: step 2/2. In terms of biological role, part of a complex that catalyzes the formation of methyl-coenzyme M and tetrahydromethanopterin from coenzyme M and methyl-tetrahydromethanopterin. This is an energy-conserving, sodium-ion translocating step. The sequence is that of Tetrahydromethanopterin S-methyltransferase subunit A from Methanosarcina acetivorans (strain ATCC 35395 / DSM 2834 / JCM 12185 / C2A).